The following is a 37-amino-acid chain: Large ribosomal subunit protein bL36c (37 aa).

Belongs to the bacterial ribosomal protein bL36 family.

The protein localises to the plastid. It is found in the chloroplast. The polypeptide is Large ribosomal subunit protein bL36c (Acorus calamus (Sweet flag)).